Consider the following 602-residue polypeptide: Alpha-glucosides permease MPH3 (602 aa).

The Cytoplasmic portion of the chain corresponds to 1 to 106 (MKNLSFLINR…AAAWSLLVST (106 aa)). A helical membrane pass occupies residues 107–127 (TLIMEGYDTAILGAFYALPIF). The Extracellular portion of the chain corresponds to 128–142 (QRKFGSQNDKTGEWE). Residues 143-163 (ISASWQIGLTLCYMAGEIVGL) form a helical membrane-spanning segment. The Cytoplasmic portion of the chain corresponds to 164–178 (QLTGPSVDLVGNRYT). The chain crosses the membrane as a helical span at residues 179 to 199 (LIIALFFLAAFTFILYFCNSL). Gly200 is a topological domain (extracellular). A helical transmembrane segment spans residues 201-221 (MIAVGQALCGMPWGCFQCLTV). At 222–234 (SYASEICPLALRY) the chain is on the cytoplasmic side. A helical membrane pass occupies residues 235-255 (YLTTYSNLCWLFGQLFAAGIM). Residues 256–270 (KNSQKKYADSELGYK) lie on the Extracellular side of the membrane. A helical transmembrane segment spans residues 271–291 (LPFALQWILPVPLALGIFFAP). Over 292 to 363 (ESPWWLVKKG…EDKINRRRTR (72 aa)) the chain is Cytoplasmic. Residues 364–384 (ITCLCWAGQATCGSILIGYST) form a helical membrane-spanning segment. At 385–397 (YFYEKAGVSTEMS) the chain is on the extracellular side. A helical transmembrane segment spans residues 398 to 418 (FTFSIIQYCLGICATFLSWWA). Over 419–426 (SKYFGRYD) the chain is Cytoplasmic. The chain crosses the membrane as a helical span at residues 427 to 447 (LYAFGLAFQTIVFFIIGGLGC). Over 448 to 459 (SSTHGSKMGSGS) the chain is Extracellular. A helical transmembrane segment spans residues 460–480 (LLMAVAFFYNLGIAPVVFCLV). The Cytoplasmic portion of the chain corresponds to 481–492 (SEMPSSRLRTKT). The helical transmembrane segment at 493–513 (IILARNTYNVVSIICSVLILY) threads the bilayer. The Extracellular portion of the chain corresponds to 514-525 (QLNSKKWNWGAK). A helical membrane pass occupies residues 526–546 (SGFFWGVLCFCTLIWAVVDLP). The Cytoplasmic portion of the chain corresponds to 547–602 (ETAGKTFVEINELFKLGVSARKFKSTKVDPFVVKNTPKYVSHNDPKGDIEASIAEE).

This sequence belongs to the major facilitator superfamily. Sugar transporter (TC 2.A.1.1) family.

Its subcellular location is the cell membrane. High-affinity uptake of maltose and maltotriose. Also transports alpha-methylglucoside, glucose and turanose but not melezitose or trehalose. This chain is Alpha-glucosides permease MPH3 (MPH3), found in Saccharomyces cerevisiae (strain YJM789) (Baker's yeast).